A 300-amino-acid chain; its full sequence is Tyrosine recombinase XerC (300 aa).

Residues 1 to 86 (MESVLDAFDQ…AVKTFTAWAV (86 aa)) enclose the Core-binding (CB) domain. Residues 107–294 (TLPAVLRQDQ…TVARLRAVHD (188 aa)) form the Tyr recombinase domain. Residues Arg151, Lys175, His246, Arg249, and His272 contribute to the active site. Catalysis depends on Tyr281, which acts as the O-(3'-phospho-DNA)-tyrosine intermediate.

The protein belongs to the 'phage' integrase family. XerC subfamily. Forms a cyclic heterotetrameric complex composed of two molecules of XerC and two molecules of XerD.

The protein localises to the cytoplasm. Functionally, site-specific tyrosine recombinase, which acts by catalyzing the cutting and rejoining of the recombining DNA molecules. The XerC-XerD complex is essential to convert dimers of the bacterial chromosome into monomers to permit their segregation at cell division. It also contributes to the segregational stability of plasmids. This is Tyrosine recombinase XerC from Mycobacterium sp. (strain KMS).